The following is a 145-amino-acid chain: Bacilliredoxin SAR1592 (145 aa).

Belongs to the bacilliredoxin family.

This Staphylococcus aureus (strain MRSA252) protein is Bacilliredoxin SAR1592.